A 317-amino-acid polypeptide reads, in one-letter code: Ribosomal RNA small subunit methyltransferase H (317 aa).

S-adenosyl-L-methionine contacts are provided by residues 34–36, Asp53, Phe80, Asp98, and Gln105; that span reads GGH.

The protein belongs to the methyltransferase superfamily. RsmH family.

The protein localises to the cytoplasm. The enzyme catalyses cytidine(1402) in 16S rRNA + S-adenosyl-L-methionine = N(4)-methylcytidine(1402) in 16S rRNA + S-adenosyl-L-homocysteine + H(+). Functionally, specifically methylates the N4 position of cytidine in position 1402 (C1402) of 16S rRNA. This Tropheryma whipplei (strain TW08/27) (Whipple's bacillus) protein is Ribosomal RNA small subunit methyltransferase H.